Consider the following 328-residue polypeptide: tRNA uridine(34) hydroxylase (328 aa).

A Rhodanese domain is found at 130-224; that stretch reads LDEDTVVLDT…YGKDPEVQGE (95 aa). Residue cysteine 184 is the Cysteine persulfide intermediate of the active site.

The protein belongs to the TrhO family.

It carries out the reaction uridine(34) in tRNA + AH2 + O2 = 5-hydroxyuridine(34) in tRNA + A + H2O. In terms of biological role, catalyzes oxygen-dependent 5-hydroxyuridine (ho5U) modification at position 34 in tRNAs. The protein is tRNA uridine(34) hydroxylase of Streptococcus agalactiae serotype Ia (strain ATCC 27591 / A909 / CDC SS700).